Reading from the N-terminus, the 209-residue chain is ATP-dependent Clp protease proteolytic subunit (209 aa).

Ser-106 functions as the Nucleophile in the catalytic mechanism. Residue His-131 is part of the active site.

Belongs to the peptidase S14 family. Fourteen ClpP subunits assemble into 2 heptameric rings which stack back to back to give a disk-like structure with a central cavity, resembling the structure of eukaryotic proteasomes.

The protein localises to the cytoplasm. It catalyses the reaction Hydrolysis of proteins to small peptides in the presence of ATP and magnesium. alpha-casein is the usual test substrate. In the absence of ATP, only oligopeptides shorter than five residues are hydrolyzed (such as succinyl-Leu-Tyr-|-NHMec, and Leu-Tyr-Leu-|-Tyr-Trp, in which cleavage of the -Tyr-|-Leu- and -Tyr-|-Trp bonds also occurs).. Functionally, cleaves peptides in various proteins in a process that requires ATP hydrolysis. Has a chymotrypsin-like activity. Plays a major role in the degradation of misfolded proteins. The polypeptide is ATP-dependent Clp protease proteolytic subunit (Caulobacter vibrioides (strain ATCC 19089 / CIP 103742 / CB 15) (Caulobacter crescentus)).